Consider the following 63-residue polypeptide: Large ribosomal subunit protein uL29 (63 aa).

The protein belongs to the universal ribosomal protein uL29 family.

The sequence is that of Large ribosomal subunit protein uL29 from Vibrio vulnificus (strain CMCP6).